The chain runs to 693 residues: Protein FAM13A (693 aa).

Ser19 carries the post-translational modification Phosphoserine. 2 disordered regions span residues Ser56–Asp89 and Arg136–Met233. Over residues Gly69–Thr78 the composition is skewed to polar residues. Residues Leu159–Glu171 show a composition bias toward low complexity. A compositionally biased stretch (basic and acidic residues) spans Glu184–His197. 2 positions are modified to phosphoserine: Ser267 and Ser287. Disordered stretches follow at residues Asp302–Glu331 and Ile396–Asp424. Phosphoserine is present on Ser397. The residue at position 402 (Thr402) is a Phosphothreonine. Residues Arg408–Ser418 are compositionally biased toward polar residues.

This sequence belongs to the FAM13 family. In terms of assembly, interacts with ANXA2. Expressed in the mammary gland, with similar levels at all stages of development, including pregnancy, lactation and involution.

Functionally, (Microbial infection) Plays a role in the clearance of Pseudomonas aeruginosa by macrophages. In complex with ANXA2, promotes activation of Rho GTPases following P.aeruginosa infection. This is Protein FAM13A (Fam13a) from Mus musculus (Mouse).